The chain runs to 64 residues: U-poneritoxin(01)-Om1a (64 aa).

The first 27 residues, 1–27 (MKPSGLTFAFLVVFMMAIMYNSVQVTA), serve as a signal peptide directing secretion. Residues 28–45 (DADADAEAEALANALAEA) constitute a propeptide that is removed on maturation. Methionine 62 carries the methionine amide modification.

Post-translationally, truncated sequences of this peptide have also been found in the venom. It is possible they have been cleaved in the venom. As to expression, expressed by the venom gland.

It localises to the secreted. Its function is as follows. Antimicrobial peptide with activities against E.coli (MIC=1.3 uM), S.aureus (MIC=3.1 uM), and S.cerevisiae (MIC=50 uM). Also shows histamine-releasing activity (32.9% at 10 uM). Does not show hemolytic activity, even at 50 uM. It is a short peptide for which no alpha-helical region has been predicted. In Odontomachus monticola (Trap-jaw ant), this protein is U-poneritoxin(01)-Om1a.